The chain runs to 392 residues: Rhizopuspepsin-5 (392 aa).

The signal sequence occupies residues 1–21 (MKFSLISSCVALAVLVLSTEA). Residues 22 to 69 (APNGKKVNIPLTKNKDYKPNAKNAIQKVLAKYHRHRSTSSSSNSTSTD) constitute a propeptide, activation peptide. Residues 85 to 389 (YFGQVKVGTP…NPTVPQVQIA (305 aa)) form the Peptidase A1 domain. Asp-103 is an active-site residue. Residues Cys-116 and Cys-119 are joined by a disulfide bond. The active site involves Asp-286. A disulfide bridge links Cys-320 with Cys-353.

The protein belongs to the peptidase A1 family.

It catalyses the reaction Hydrolysis of proteins with broad specificity similar to that of pepsin A, preferring hydrophobic residues at P1 and P1'. Clots milk and activates trypsinogen. Does not cleave 4-Gln-|-His-5, but does cleave 10-His-|-Leu-11 and 12-Val-|-Glu-13 in B chain of insulin.. The polypeptide is Rhizopuspepsin-5 (Rhizopus niveus).